The primary structure comprises 166 residues: Glutamyl-tRNA(Gln) amidotransferase subunit C, mitochondrial (166 aa).

A mitochondrion-targeting transit peptide spans 1-44; that stretch reads MIRGWTIFTLCKPSALVGSSHFNKQFNWAKSQLQFATKVPQQPY.

Belongs to the GatC family. Subunit of the heterotrimeric GatCAB amidotransferase (AdT) complex, composed of A, B and C subunits.

The protein localises to the mitochondrion. The catalysed reaction is L-glutamyl-tRNA(Gln) + L-glutamine + ATP + H2O = L-glutaminyl-tRNA(Gln) + L-glutamate + ADP + phosphate + H(+). Functionally, allows the formation of correctly charged Gln-tRNA(Gln) through the transamidation of misacylated Glu-tRNA(Gln) in the mitochondria. The reaction takes place in the presence of glutamine and ATP through an activated gamma-phospho-Glu-tRNA(Gln). The chain is Glutamyl-tRNA(Gln) amidotransferase subunit C, mitochondrial from Anopheles darlingi (Mosquito).